The primary structure comprises 373 residues: Probable cysteine protease RD19C (373 aa).

Positions 1–20 are cleaved as a signal peptide; the sequence is MDRVVFFFLIAATLLAGSLG. A propeptide spans 21 to 139 (activation peptide); that stretch reads STVISGEVTD…QTAPILPTSD (119 aa). 2 disulfides stabilise this stretch: Cys161–Cys211 and Cys195–Cys245. The active site involves Cys164. An N-linked (GlcNAc...) asparagine glycan is attached at Asn258. A disulfide bridge links Cys301 with Cys356. Residues His307 and Asn334 contribute to the active site.

The protein belongs to the peptidase C1 family.

Its subcellular location is the lytic vacuole. Probable thiol protease. This is Probable cysteine protease RD19C from Arabidopsis thaliana (Mouse-ear cress).